Consider the following 658-residue polypeptide: Structure-specific endonuclease subunit SLX1 (658 aa).

The GIY-YIG domain occupies 12 to 92; that stretch reads PFYACYFLRS…AKPHLSRHLK (81 aa). 4 disordered regions span residues 29-52, 239-269, 288-328, and 594-658; these read YIGS…QGAY, GVAE…ETLP, PIPQ…NGVD, and TTSR…IDLT. Composition is skewed to basic and acidic residues over residues 308-324 and 627-640; these read KLSD…HDAE and SKID…DTKK. Polar residues predominate over residues 641–652; the sequence is NTTQKAKSNETS.

It belongs to the SLX1 family. As to quaternary structure, forms a heterodimer with SLX4. A divalent metal cation serves as cofactor.

It is found in the nucleus. In terms of biological role, catalytic subunit of the SLX1-SLX4 structure-specific endonuclease that resolves DNA secondary structures generated during DNA repair and recombination. Has endonuclease activity towards branched DNA substrates, introducing single-strand cuts in duplex DNA close to junctions with ss-DNA. In Mycosarcoma maydis (Corn smut fungus), this protein is Structure-specific endonuclease subunit SLX1.